The chain runs to 553 residues: MRKIQAKKGLSIECKGWEQEAVLRMLYNNLDPEVAERPEDLVVYGGIGKAARNWEAFEAIEKTLRELESDETMLVQSGKPVAVFKTHEEAPRVLISNSVLVPEWANWDHFNELDKKGLIMYGQMTAGSWIYIGSQGIVQGTYETFAELGNQHFNGDLAGTVTLTAGLGGMGGAQPLAITMNHGVAICVDVDETRVDKRIDTKYCDVKTADLDEALKLAEEAKERGEGLSIGLVGNAVDIHQAILEKGFKIDIITDQTSAHDPLNGYVPQGYSVEEAKVLREKDPKKYVELSQASMAKHVELMLEFQKRGAVAFDYGNNIRQVAFNNGVKNAFDFPGFVPAYIRPLFCEGKGPFRFAALSGDPKDIERADEEMRKLFPENEKLLRWLDLAEEKISYQGLPSRIAWLGYGERAKMGLALNRLVRDGEISAPIVIGRDHLDAGSVASPNRETESMKDGSDAVGDWAVLNALINTAAGGSWISFHHGGGVGMGYSLHAGMVVVADGSERAERRLERVLTTDPGMGVARHVDAGYDIAIQTAKEKGIHIPMIDKAGDK.

NAD(+) contacts are provided by residues 45 to 46 (GG), Gln-123, 169 to 171 (GMG), Asp-189, Arg-194, 235 to 236 (NA), 256 to 260 (QTSAH), 266 to 267 (YV), Tyr-315, and Gly-485.

The protein belongs to the urocanase family. It depends on NAD(+) as a cofactor.

Its subcellular location is the cytoplasm. The catalysed reaction is 4-imidazolone-5-propanoate = trans-urocanate + H2O. Its pathway is amino-acid degradation; L-histidine degradation into L-glutamate; N-formimidoyl-L-glutamate from L-histidine: step 2/3. Catalyzes the conversion of urocanate to 4-imidazolone-5-propionate. The sequence is that of Urocanate hydratase from Staphylococcus aureus (strain COL).